The primary structure comprises 383 residues: Dual-specificity RNA methyltransferase RlmN (383 aa).

E95 acts as the Proton acceptor in catalysis. Residues 101–349 (EETRGTLCVS…TTVRKTRGDD (249 aa)) form the Radical SAM core domain. A disulfide bond links C108 and C354. 3 residues coordinate [4Fe-4S] cluster: C115, C119, and C122. S-adenosyl-L-methionine-binding positions include 180 to 181 (GE), S212, 234 to 236 (SLH), and N311. The S-methylcysteine intermediate role is filled by C354.

The protein belongs to the radical SAM superfamily. RlmN family. [4Fe-4S] cluster serves as cofactor.

The protein localises to the cytoplasm. It carries out the reaction adenosine(2503) in 23S rRNA + 2 reduced [2Fe-2S]-[ferredoxin] + 2 S-adenosyl-L-methionine = 2-methyladenosine(2503) in 23S rRNA + 5'-deoxyadenosine + L-methionine + 2 oxidized [2Fe-2S]-[ferredoxin] + S-adenosyl-L-homocysteine. It catalyses the reaction adenosine(37) in tRNA + 2 reduced [2Fe-2S]-[ferredoxin] + 2 S-adenosyl-L-methionine = 2-methyladenosine(37) in tRNA + 5'-deoxyadenosine + L-methionine + 2 oxidized [2Fe-2S]-[ferredoxin] + S-adenosyl-L-homocysteine. Functionally, specifically methylates position 2 of adenine 2503 in 23S rRNA and position 2 of adenine 37 in tRNAs. m2A2503 modification seems to play a crucial role in the proofreading step occurring at the peptidyl transferase center and thus would serve to optimize ribosomal fidelity. In Paraburkholderia phytofirmans (strain DSM 17436 / LMG 22146 / PsJN) (Burkholderia phytofirmans), this protein is Dual-specificity RNA methyltransferase RlmN.